The following is a 656-amino-acid chain: Vi polysaccharide export protein VexE (656 aa).

Its function is as follows. May be involved in translocation of the Vi antigen. The protein is Vi polysaccharide export protein VexE (vexE) of Salmonella typhi.